Reading from the N-terminus, the 369-residue chain is MDAKLSPNQGLNISGIGLASSLAAGLGIAALTLDWMANRNPWQGTSLTLPLLLCTIASAIAGYFVVPLLQALKTGQIIREDGPQAHLKKAGTPTMGGIFFIPVAVVGACVLSNFATEVLAVSALTLSYGLIGWIDDWQILRRKSNKGISPRMKLALQIGFAAAFCLWLMFNQPANITSIALPWVSFALPLGFLFWPLAGFVLVAESNATNLTDGIDGLAGGTVAIALLALGAIVAPTSPALMVFCAALSGSCLGFLAHNRNPARVFMGDTGSLALGGALAAVALLTNSLVALFILSGIFFVETLSVMAQVSYYKATKGPDGKGKRLLKMAPLHHHLELSGWSELQVVSSFYVIAAILAAICLAIASGGA.

10 helical membrane passes run 13 to 33 (ISGI…ALTL), 49 to 69 (LPLL…VPLL), 95 to 115 (MGGI…SNFA), 119 to 139 (LAVS…DWQI), 154 to 174 (LALQ…NQPA), 183 to 203 (WVSF…FVLV), 215 to 235 (IDGL…AIVA), 237 to 257 (TSPA…GFLA), 281 to 301 (AVAL…IFFV), and 346 to 366 (VVSS…AIAS).

The protein belongs to the glycosyltransferase 4 family. MraY subfamily. The cofactor is Mg(2+).

Its subcellular location is the cell inner membrane. It catalyses the reaction UDP-N-acetyl-alpha-D-muramoyl-L-alanyl-gamma-D-glutamyl-meso-2,6-diaminopimeloyl-D-alanyl-D-alanine + di-trans,octa-cis-undecaprenyl phosphate = di-trans,octa-cis-undecaprenyl diphospho-N-acetyl-alpha-D-muramoyl-L-alanyl-D-glutamyl-meso-2,6-diaminopimeloyl-D-alanyl-D-alanine + UMP. The protein operates within cell wall biogenesis; peptidoglycan biosynthesis. Its function is as follows. Catalyzes the initial step of the lipid cycle reactions in the biosynthesis of the cell wall peptidoglycan: transfers peptidoglycan precursor phospho-MurNAc-pentapeptide from UDP-MurNAc-pentapeptide onto the lipid carrier undecaprenyl phosphate, yielding undecaprenyl-pyrophosphoryl-MurNAc-pentapeptide, known as lipid I. This chain is Phospho-N-acetylmuramoyl-pentapeptide-transferase, found in Nostoc sp. (strain PCC 7120 / SAG 25.82 / UTEX 2576).